Reading from the N-terminus, the 38-residue chain is Photosystem II reaction center protein L (38 aa).

The helical transmembrane segment at Ser17–Phe37 threads the bilayer.

This sequence belongs to the PsbL family. PSII is composed of 1 copy each of membrane proteins PsbA, PsbB, PsbC, PsbD, PsbE, PsbF, PsbH, PsbI, PsbJ, PsbK, PsbL, PsbM, PsbT, PsbX, PsbY, PsbZ, Psb30/Ycf12, at least 3 peripheral proteins of the oxygen-evolving complex and a large number of cofactors. It forms dimeric complexes.

Its subcellular location is the plastid. It localises to the chloroplast thylakoid membrane. Its function is as follows. One of the components of the core complex of photosystem II (PSII). PSII is a light-driven water:plastoquinone oxidoreductase that uses light energy to abstract electrons from H(2)O, generating O(2) and a proton gradient subsequently used for ATP formation. It consists of a core antenna complex that captures photons, and an electron transfer chain that converts photonic excitation into a charge separation. This subunit is found at the monomer-monomer interface and is required for correct PSII assembly and/or dimerization. The sequence is that of Photosystem II reaction center protein L from Chlorokybus atmophyticus (Soil alga).